The sequence spans 410 residues: LL-diaminopimelate aminotransferase (410 aa).

2 residues coordinate substrate: Y15 and G42. Residues Y72, 108–109 (AK), Y132, N187, Y218, and 246–248 (SFS) contribute to the pyridoxal 5'-phosphate site. The substrate site is built by K109, Y132, and N187. K249 carries the post-translational modification N6-(pyridoxal phosphate)lysine. Pyridoxal 5'-phosphate contacts are provided by R257 and N292. Substrate-binding residues include N292 and R388.

This sequence belongs to the class-I pyridoxal-phosphate-dependent aminotransferase family. LL-diaminopimelate aminotransferase subfamily. As to quaternary structure, homodimer. It depends on pyridoxal 5'-phosphate as a cofactor.

The enzyme catalyses (2S,6S)-2,6-diaminopimelate + 2-oxoglutarate = (S)-2,3,4,5-tetrahydrodipicolinate + L-glutamate + H2O + H(+). Its pathway is amino-acid biosynthesis; L-lysine biosynthesis via DAP pathway; LL-2,6-diaminopimelate from (S)-tetrahydrodipicolinate (aminotransferase route): step 1/1. Its function is as follows. Involved in the synthesis of meso-diaminopimelate (m-DAP or DL-DAP), required for both lysine and peptidoglycan biosynthesis. Catalyzes the direct conversion of tetrahydrodipicolinate to LL-diaminopimelate. Can also use m-DAP instead of LL-DAP as the amino-group donor. This is LL-diaminopimelate aminotransferase from Acetivibrio thermocellus (strain ATCC 27405 / DSM 1237 / JCM 9322 / NBRC 103400 / NCIMB 10682 / NRRL B-4536 / VPI 7372) (Clostridium thermocellum).